The following is a 493-amino-acid chain: Glutamyl-tRNA(Gln) amidotransferase subunit A (493 aa).

Catalysis depends on charge relay system residues K79 and S159. S183 serves as the catalytic Acyl-ester intermediate.

It belongs to the amidase family. GatA subfamily. As to quaternary structure, heterotrimer of A, B and C subunits.

The catalysed reaction is L-glutamyl-tRNA(Gln) + L-glutamine + ATP + H2O = L-glutaminyl-tRNA(Gln) + L-glutamate + ADP + phosphate + H(+). In terms of biological role, allows the formation of correctly charged Gln-tRNA(Gln) through the transamidation of misacylated Glu-tRNA(Gln) in organisms which lack glutaminyl-tRNA synthetase. The reaction takes place in the presence of glutamine and ATP through an activated gamma-phospho-Glu-tRNA(Gln). The polypeptide is Glutamyl-tRNA(Gln) amidotransferase subunit A (Chelativorans sp. (strain BNC1)).